The following is a 323-amino-acid chain: Cysteine synthase A (323 aa).

Residues asparagine 8 and arginine 35 each coordinate hydrogen sulfide. At lysine 42 the chain carries N6-(pyridoxal phosphate)lysine. Pyridoxal 5'-phosphate is bound by residues asparagine 72 and 177 to 181; that span reads GTGGT. Leucine 269 contributes to the hydrogen sulfide binding site. Residue serine 273 participates in pyridoxal 5'-phosphate binding.

Belongs to the cysteine synthase/cystathionine beta-synthase family. As to quaternary structure, homodimer. Pyridoxal 5'-phosphate is required as a cofactor.

It carries out the reaction O-acetyl-L-serine + hydrogen sulfide = L-cysteine + acetate. It functions in the pathway amino-acid biosynthesis; L-cysteine biosynthesis; L-cysteine from L-serine: step 2/2. The protein is Cysteine synthase A (cysK) of Escherichia coli O157:H7.